A 459-amino-acid polypeptide reads, in one-letter code: Trigger factor (459 aa).

The 80-residue stretch at 166–245 (GDFANIDLTA…VNSVKAEELP (80 aa)) folds into the PPIase FKBP-type domain.

The protein belongs to the FKBP-type PPIase family. Tig subfamily.

The protein resides in the cytoplasm. It carries out the reaction [protein]-peptidylproline (omega=180) = [protein]-peptidylproline (omega=0). Involved in protein export. Acts as a chaperone by maintaining the newly synthesized protein in an open conformation. Functions as a peptidyl-prolyl cis-trans isomerase. This chain is Trigger factor, found in Bifidobacterium longum (strain NCC 2705).